Reading from the N-terminus, the 398-residue chain is MFIKRKLKETEIKDFTLNFGPQHPAAHGVLRLILELNGETIKNADPHIGLLHRGTEKLIENRNYLQALPYFDRLDYVSMMVQEHAYSLAVERLYGINIPQRAQWIRVLFSEITRILNHLLAIGCHSMDVGAMTPLLWGFEEREKLMEFYERVSGARMHASYIRPGGVAQDLPSGFVEDVYSFILDFSVRLDEIEELLTNNRIWKQRLVNVGIVTAKQAIQNGFSGVLLRSTGIPWDLRRSQPYEIYDKVPFRIPVGTRGDCYDRYLIRMQEMRQSLRIMMACLKYLPGGSIKSDDKKFVPPLRWEMKNSMESVIHHFKYFTEGFKVPAGQTYAAVEAPKGEMGVFLISDGSNQPFRCKIKAPGFFHLQNLPEMTKHHMIADVVTIIGTQDIVFGEVDR.

It belongs to the complex I 49 kDa subunit family.

It is found in the mitochondrion. The catalysed reaction is a ubiquinone + NADH + 5 H(+)(in) = a ubiquinol + NAD(+) + 4 H(+)(out). Its function is as follows. Core subunit of the mitochondrial membrane respiratory chain NADH dehydrogenase (Complex I) that is believed to belong to the minimal assembly required for catalysis. Complex I functions in the transfer of electrons from NADH to the respiratory chain. The immediate electron acceptor for the enzyme is believed to be ubiquinone. Component of the iron-sulfur (IP) fragment of the enzyme. Component of the iron-sulfur (IP) fragment of the enzyme. In Cafeteria roenbergensis (Marine flagellate), this protein is NADH-ubiquinone oxidoreductase 49 kDa subunit (NAD7).